The following is a 154-amino-acid chain: UPF0260 protein NTHI1811 (154 aa).

Belongs to the UPF0260 family.

The protein is UPF0260 protein NTHI1811 of Haemophilus influenzae (strain 86-028NP).